The following is a 1196-amino-acid chain: Cingulin (1196 aa).

The tract at residues Met7–Gly354 is head. The short motif at Ala48–Gly62 is the ZIM element. The interaction with TJP1/ZO1 stretch occupies residues Ala54–Val67. The disordered stretch occupies residues Ile82 to Tyr105. A phosphoserine mark is found at Ser95, Ser96, Ser98, Ser135, Ser137, Ser140, Ser155, Ser165, and Ser214. A compositionally biased stretch (polar residues) spans Ser95–Tyr105. Residues Asn183 to Cys263 are disordered. Residues Arg218–Phe231 are compositionally biased toward basic and acidic residues. The span at Met245–Gly256 shows a compositional bias: polar residues. Ser274 carries the phosphoserine modification. The stretch at Leu355–Ser1150 forms a coiled coil. Lys576 is modified (N6-acetyllysine). The segment covering Ala884–Lys897 has biased composition (basic and acidic residues). 3 disordered regions span residues Ala884–Gln906, Asp1023–Glu1061, and Asp1149–Asp1174. Over residues Ser1038–Glu1050 the composition is skewed to low complexity. A compositionally biased stretch (basic and acidic residues) spans Leu1051–Glu1061. The tract at residues Ser1155–Cys1196 is tail. Ser1168, Ser1169, and Ser1175 each carry phosphoserine.

It belongs to the cingulin family. As to quaternary structure, homodimer. Interacts with TJP1/ZO1 and SPEF1.

The protein localises to the cell junction. It is found in the tight junction. In terms of biological role, probably plays a role in the formation and regulation of the tight junction (TJ) paracellular permeability barrier. This chain is Cingulin, found in Canis lupus familiaris (Dog).